The chain runs to 790 residues: MLKRLARNNSSPWICSRCLQQSQRQRRFNSTFAATATARDHAPSALYGLSASGKTDDDALRKVFDNASFWESFKRGTSNKKPSGIIGNKYLTHPDGFIDFVTVTIQRCNGVVEKVSRAETIEDFKYMVKDLDKLSDLLCRVIDLADFVRSTHPNRQFQIMAVKAYHTVFQYMNQLNTTPVLYDQLKKASDIPEVFESWTEEERIVARILMEDFARFGIGLDDATRQKLVDLSGEIAEVGSQFVEGMSPETPTLKFESKRLKGLDPNLAKALTKWGETRISTMHHEAQAVLRFVDDAEVRRETYSAVRTAGSSTIARLEKMLKLRAELAQLSGYETFSHMTLENKMAKTPEAVNTFLKALYEDSRPSVLADLHELMELKRGDAHQDNFPNRMNAWDKFYYTQKMLSTMEGAYKQRTADSLSAYFSVGTVLQGISRLFDRLYGVRLVPQETQPGEVWEDGVRRLDVISDTEGHIAVLYCDLFSRPGKTPNPAHFTLRCSREILPAELEEMQHMPHRFSSPIEAATDGMSVSYNASRNSYFQLPTIALICDFSKPSSPRPTLLNIHDVRTLFHEMGHALHSILGRTALQNVSGTRCATDIAELPSVLMEHFAFDPSVLALYARHWDTNAPLPLALLENRLAIDNRNGYSELESQILLAMLDQAYHSNLPLDPAFNSTSVYHNTYTRFASVPEPAGTRWQGFFGHLFGYGATYYSYLFDRAIASRIWKGVFNEGRDGGSLDREKGELYKNEVLRWGGGRDGWVCLAGVLRDGKVGEGGEGAMREVGKWGIDAGK.

The N-terminal 29 residues, 1-29, are a transit peptide targeting the mitochondrion; it reads MLKRLARNNSSPWICSRCLQQSQRQRRFN. Position 570 (His570) interacts with Zn(2+). Glu571 is a catalytic residue. Residues His574 and His577 each coordinate Zn(2+).

It belongs to the peptidase M3 family. The cofactor is Zn(2+).

The protein localises to the mitochondrion matrix. The enzyme catalyses Release of an N-terminal octapeptide as second stage of processing of some proteins imported into the mitochondrion.. Functionally, cleaves proteins, imported into the mitochondrion, to their mature size. While most mitochondrial precursor proteins are processed to the mature form in one step by mitochondrial processing peptidase (MPP), the sequential cleavage by MIP of an octapeptide after initial processing by MPP is a required step for a subgroup of nuclear-encoded precursor proteins destined for the matrix or the inner membrane. In Phaeosphaeria nodorum (strain SN15 / ATCC MYA-4574 / FGSC 10173) (Glume blotch fungus), this protein is Mitochondrial intermediate peptidase (OCT1).